We begin with the raw amino-acid sequence, 520 residues long: Maturase K (520 aa).

This sequence belongs to the intron maturase 2 family. MatK subfamily.

The protein localises to the plastid. Its subcellular location is the chloroplast. Its function is as follows. Usually encoded in the trnK tRNA gene intron. Probably assists in splicing its own and other chloroplast group II introns. This Iris cristata (Dwarf crested iris) protein is Maturase K.